Reading from the N-terminus, the 417-residue chain is Gamma-glutamyl phosphate reductase (417 aa).

It belongs to the gamma-glutamyl phosphate reductase family.

It localises to the cytoplasm. The catalysed reaction is L-glutamate 5-semialdehyde + phosphate + NADP(+) = L-glutamyl 5-phosphate + NADPH + H(+). The protein operates within amino-acid biosynthesis; L-proline biosynthesis; L-glutamate 5-semialdehyde from L-glutamate: step 2/2. Its function is as follows. Catalyzes the NADPH-dependent reduction of L-glutamate 5-phosphate into L-glutamate 5-semialdehyde and phosphate. The product spontaneously undergoes cyclization to form 1-pyrroline-5-carboxylate. This is Gamma-glutamyl phosphate reductase from Desulfitobacterium hafniense (strain Y51).